The following is a 394-amino-acid chain: Subtilisin-like protease 4 (394 aa).

The N-terminal stretch at 1–17 is a signal peptide; sequence CLKTLSVFLAAFAAADA. Residues 18 to 116 constitute a propeptide that is removed on maturation; it reads RAVFKTQGHK…VEQDQVVRIS (99 aa). The Inhibitor I9 domain maps to 36–115; the sequence is YIVVMKDGVS…YVEQDQVVRI (80 aa). A glycan (N-linked (GlcNAc...) asparagine) is linked at asparagine 100. A Peptidase S8 domain is found at 126-394; that stretch reads SWGLGRVSHR…STTNRLLYNG (269 aa). Catalysis depends on charge relay system residues aspartate 158 and histidine 189. Asparagine 250 and asparagine 306 each carry an N-linked (GlcNAc...) asparagine glycan. Serine 344 (charge relay system) is an active-site residue.

Belongs to the peptidase S8 family.

It is found in the secreted. In terms of biological role, secreted subtilisin-like serine protease with keratinolytic activity that contributes to pathogenicity. This is Subtilisin-like protease 4 (SUB4) from Trichophyton equinum (Horse ringworm fungus).